Consider the following 874-residue polypeptide: GRB2-associated and regulator of MAPK protein 2 (874 aa).

The interval 12–339 (RWSMGAFPLD…LLAGDPRVER (328 aa)) is CABIT. A compositionally biased stretch (gly residues) spans 188-206 (GGGGPASAGAAGGTGGGGA). Disordered stretches follow at residues 188 to 207 (GGGG…GGAR), 388 to 422 (PGLA…EPAA), 437 to 545 (GPEG…SPSP), 563 to 598 (GESS…AASL), and 625 to 742 (APFG…PSKA). Composition is skewed to low complexity over residues 388–403 (PGLA…APAG) and 518–545 (SPSS…SPSP). Residues 575–585 (PSTTQPSQASR) are compositionally biased toward polar residues. Composition is skewed to low complexity over residues 632-650 (PFSG…SSGP) and 658-691 (ATSG…SSSS). Residue Ser735 is modified to Phosphoserine. The 65-residue stretch at 807 to 871 (SALSLEEVSR…KIMQFIKGWR (65 aa)) folds into the SAM domain.

This sequence belongs to the GAREM family.

Its function is as follows. Probable adapter protein that may provide a link between cell surface epidermal growth factor receptor and the MAPK/ERK signaling pathway. The sequence is that of GRB2-associated and regulator of MAPK protein 2 (GAREM2) from Homo sapiens (Human).